A 317-amino-acid polypeptide reads, in one-letter code: Metaxin-1 (317 aa).

Residues Lys-38, Lys-41, and Lys-78 each participate in a glycyl lysine isopeptide (Lys-Gly) (interchain with G-Cter in ubiquitin) cross-link. A helical membrane pass occupies residues 164 to 184; it reads EELEKELYQEARECLTLLSQR.

Belongs to the metaxin family. Interacts with MTX2/metaxin-2. Associates with the mitochondrial contact site and cristae organizing system (MICOS) complex, composed of at least MICOS10/MIC10, CHCHD3/MIC19, CHCHD6/MIC25, APOOL/MIC27, IMMT/MIC60, APOO/MIC23/MIC26 and QIL1/MIC13. This complex was also known under the names MINOS or MitOS complex. The MICOS complex associates with mitochondrial outer membrane proteins SAMM50, MTX1 and MTX2 (together described as components of the mitochondrial outer membrane sorting assembly machinery (SAM) complex) and DNAJC11, mitochondrial inner membrane protein TMEM11 and with HSPA9. The MICOS and SAM complexes together with DNAJC11 are part of a large protein complex spanning both membranes termed the mitochondrial intermembrane space bridging (MIB) complex. Interacts with ARMC1. In terms of processing, ubiquitinated by PRKN during mitophagy, leading to its degradation and enhancement of mitophagy. Deubiquitinated by USP30.

It localises to the mitochondrion outer membrane. In terms of biological role, involved in transport of proteins into the mitochondrion. Essential for embryonic development. This is Metaxin-1 (MTX1) from Sus scrofa (Pig).